Consider the following 116-residue polypeptide: Protein Rev (116 aa).

Phosphoserine; by host CK2 is present on residues S5 and S8. The segment at I18–N26 is homomultimerization. The tract at residues K20 to R48 is disordered. Residues T34 to R50 carry the Nuclear localization signal and RNA-binding (RRE) motif. A compositionally biased stretch (basic residues) spans Q36 to R48. A Nuclear export signal and binding to XPO1 motif is present at residues L73–D84. Residues T91 to E116 form a disordered region. 2 positions are modified to phosphoserine; by host: S92 and S99.

Belongs to the HIV-1 REV protein family. As to quaternary structure, homomultimer; when bound to the RRE. Multimeric assembly is essential for activity and may involve XPO1. Binds to human KPNB1, XPO1, TNPO1, RANBP5 and IPO7. Interacts with the viral Integrase. Interacts with human KHDRBS1. Interacts with human NAP1; this interaction decreases Rev multimerization and stimulates its activity. Interacts with human DEAD-box helicases DDX3 and DDX24; these interactions may serve for viral RNA export to the cytoplasm and packaging, respectively. Interacts with human PSIP1; this interaction may inhibit HIV-1 DNA integration by promoting dissociation of the Integrase-LEDGF/p75 complex. Post-translationally, asymmetrically arginine dimethylated at one site by host PRMT6. Methylation impairs the RNA-binding activity and export of viral RNA from the nucleus to the cytoplasm. Phosphorylated by protein kinase CK2. Presence of, and maybe binding to the N-terminus of the regulatory beta subunit of CK2 is necessary for CK2-mediated Rev's phosphorylation.

It localises to the host nucleus. Its subcellular location is the host nucleolus. It is found in the host cytoplasm. In terms of biological role, escorts unspliced or incompletely spliced viral pre-mRNAs (late transcripts) out of the nucleus of infected cells. These pre-mRNAs carry a recognition sequence called Rev responsive element (RRE) located in the env gene, that is not present in fully spliced viral mRNAs (early transcripts). This function is essential since most viral proteins are translated from unspliced or partially spliced pre-mRNAs which cannot exit the nucleus by the pathway used by fully processed cellular mRNAs. Rev itself is translated from a fully spliced mRNA that readily exits the nucleus. Rev's nuclear localization signal (NLS) binds directly to KPNB1/Importin beta-1 without previous binding to KPNA1/Importin alpha-1. KPNB1 binds to the GDP bound form of RAN (Ran-GDP) and targets Rev to the nucleus. In the nucleus, the conversion from Ran-GDP to Ran-GTP dissociates Rev from KPNB1 and allows Rev's binding to the RRE in viral pre-mRNAs. Rev multimerization on the RRE via cooperative assembly exposes its nuclear export signal (NES) to the surface. Rev can then form a complex with XPO1/CRM1 and Ran-GTP, leading to nuclear export of the complex. Conversion from Ran-GTP to Ran-GDP mediates dissociation of the Rev/RRE/XPO1/RAN complex, so that Rev can return to the nucleus for a subsequent round of export. Beside KPNB1, also seems to interact with TNPO1/Transportin-1, RANBP5/IPO5 and IPO7/RANBP7 for nuclear import. The nucleoporin-like HRB/RIP is an essential cofactor that probably indirectly interacts with Rev to release HIV RNAs from the perinuclear region to the cytoplasm. The protein is Protein Rev of Human immunodeficiency virus type 1 group M subtype B (isolate CDC-451) (HIV-1).